Here is a 192-residue protein sequence, read N- to C-terminus: A-type ATP synthase subunit E (192 aa).

Belongs to the V-ATPase E subunit family. Has multiple subunits with at least A(3), B(3), C, D, E, F, H, I and proteolipid K(x).

The protein localises to the cell membrane. Its function is as follows. Component of the A-type ATP synthase that produces ATP from ADP in the presence of a proton gradient across the membrane. This Methanocorpusculum labreanum (strain ATCC 43576 / DSM 4855 / Z) protein is A-type ATP synthase subunit E.